We begin with the raw amino-acid sequence, 1274 residues long: Clustered mitochondria protein homolog (1274 aa).

A disordered region spans residues 1–53; the sequence is MAQTNGELEHSKGMSSPAVRISQAQKSTKLTVDPESPEQVANGTHAEGEQPEE. TPR repeat units follow at residues 293 to 326, 510 to 543, and 628 to 661; these read SPSF…PNNP, DYGG…KKHP, and AKEA…ERVD. The Clu domain occupies 342-586; sequence DITRSQENYL…RVTPLDVMWQ (245 aa). Disordered stretches follow at residues 631–655 and 893–925; these read AAKK…EEAL and VSNG…ARAA. 4 TPR repeats span residues 998–1031, 1040–1073, 1082–1115, and 1124–1157; these read AKLY…TERT, ILSY…WKII, ITTM…CESL, and ATIL…FLQQ. Positions 1197 to 1274 are disordered; the sequence is INMTPRTLGT…KLRGSKKSSA (78 aa). Over residues 1200–1217 the composition is skewed to polar residues; the sequence is TPRTLGTRVQPQVGQTAP.

This sequence belongs to the CLU family. As to quaternary structure, may associate with the eukaryotic translation initiation factor 3 (eIF-3) complex.

It localises to the cytoplasm. In terms of biological role, mRNA-binding protein involved in proper cytoplasmic distribution of mitochondria. The sequence is that of Clustered mitochondria protein homolog from Aspergillus terreus (strain NIH 2624 / FGSC A1156).